The sequence spans 356 residues: UDP-N-acetylglucosamine--N-acetylmuramyl-(pentapeptide) pyrophosphoryl-undecaprenol N-acetylglucosamine transferase (356 aa).

Residues 11-13 (TGG), asparagine 123, arginine 159, serine 187, isoleucine 241, 260-265 (ALTVAE), and glutamine 286 each bind UDP-N-acetyl-alpha-D-glucosamine.

The protein belongs to the glycosyltransferase 28 family. MurG subfamily.

Its subcellular location is the cell inner membrane. It catalyses the reaction di-trans,octa-cis-undecaprenyl diphospho-N-acetyl-alpha-D-muramoyl-L-alanyl-D-glutamyl-meso-2,6-diaminopimeloyl-D-alanyl-D-alanine + UDP-N-acetyl-alpha-D-glucosamine = di-trans,octa-cis-undecaprenyl diphospho-[N-acetyl-alpha-D-glucosaminyl-(1-&gt;4)]-N-acetyl-alpha-D-muramoyl-L-alanyl-D-glutamyl-meso-2,6-diaminopimeloyl-D-alanyl-D-alanine + UDP + H(+). It participates in cell wall biogenesis; peptidoglycan biosynthesis. Cell wall formation. Catalyzes the transfer of a GlcNAc subunit on undecaprenyl-pyrophosphoryl-MurNAc-pentapeptide (lipid intermediate I) to form undecaprenyl-pyrophosphoryl-MurNAc-(pentapeptide)GlcNAc (lipid intermediate II). The chain is UDP-N-acetylglucosamine--N-acetylmuramyl-(pentapeptide) pyrophosphoryl-undecaprenol N-acetylglucosamine transferase from Azoarcus sp. (strain BH72).